Consider the following 780-residue polypeptide: uncharacterized protein (780 aa).

A BTB domain is found at 10 to 80; that stretch reads NNNIIKLNIG…MRTGTFTLPY (71 aa).

This is an uncharacterized protein from Dictyostelium discoideum (Social amoeba).